A 120-amino-acid polypeptide reads, in one-letter code: uncharacterized protein (120 aa).

This is an uncharacterized protein from Mycobacterium tuberculosis (strain CDC 1551 / Oshkosh).